The sequence spans 270 residues: Phosphatidylglycerol--prolipoprotein diacylglyceryl transferase (270 aa).

A run of 7 helical transmembrane segments spans residues 10 to 30, 56 to 76, 92 to 112, 120 to 140, 175 to 195, 202 to 222, and 237 to 257; these read VAVA…LVGI, LIFW…VLFY, WKGG…AWWF, FFQL…AGRI, SQLY…NLYA, MAVS…VEFV, and VTMG…LIWL. Arg139 serves as a coordination point for a 1,2-diacyl-sn-glycero-3-phospho-(1'-sn-glycerol).

It belongs to the Lgt family.

It is found in the cell inner membrane. It catalyses the reaction L-cysteinyl-[prolipoprotein] + a 1,2-diacyl-sn-glycero-3-phospho-(1'-sn-glycerol) = an S-1,2-diacyl-sn-glyceryl-L-cysteinyl-[prolipoprotein] + sn-glycerol 1-phosphate + H(+). It functions in the pathway protein modification; lipoprotein biosynthesis (diacylglyceryl transfer). In terms of biological role, catalyzes the transfer of the diacylglyceryl group from phosphatidylglycerol to the sulfhydryl group of the N-terminal cysteine of a prolipoprotein, the first step in the formation of mature lipoproteins. This is Phosphatidylglycerol--prolipoprotein diacylglyceryl transferase from Pseudomonas syringae pv. tomato (strain ATCC BAA-871 / DC3000).